A 568-amino-acid polypeptide reads, in one-letter code: Proline--tRNA ligase (568 aa).

It belongs to the class-II aminoacyl-tRNA synthetase family. ProS type 1 subfamily. Homodimer.

The protein resides in the cytoplasm. It carries out the reaction tRNA(Pro) + L-proline + ATP = L-prolyl-tRNA(Pro) + AMP + diphosphate. Its function is as follows. Catalyzes the attachment of proline to tRNA(Pro) in a two-step reaction: proline is first activated by ATP to form Pro-AMP and then transferred to the acceptor end of tRNA(Pro). As ProRS can inadvertently accommodate and process non-cognate amino acids such as alanine and cysteine, to avoid such errors it has two additional distinct editing activities against alanine. One activity is designated as 'pretransfer' editing and involves the tRNA(Pro)-independent hydrolysis of activated Ala-AMP. The other activity is designated 'posttransfer' editing and involves deacylation of mischarged Ala-tRNA(Pro). The misacylated Cys-tRNA(Pro) is not edited by ProRS. The sequence is that of Proline--tRNA ligase from Listeria monocytogenes serotype 4b (strain F2365).